The chain runs to 996 residues: Phototropin-1 (996 aa).

The tract at residues 1 to 184 is disordered; sequence MEPTEKPSTK…PGGRSGIPRV (184 aa). Residues Ser-23 and Ser-58 each carry the phosphoserine modification. The segment covering 49–59 has biased composition (polar residues); sequence QNLSDPRGTSP. Residues 60-70 are compositionally biased toward pro residues; it reads QPRPQQEPAPS. A compositionally biased stretch (polar residues) spans 141-153; it reads SGGTENDPNGKKT. The segment covering 155–166 has biased composition (low complexity); sequence SQRNSQNSCRSS. A PAS 1 domain is found at 184-257; sequence VSEDLKDALS…AKIRETLAAG (74 aa). Ser-185 is modified (phosphoserine). FMN is bound at residue Asn-233. Residue Cys-234 is modified to S-4a-FMN cysteine. FMN contacts are provided by Arg-235, Gln-238, Arg-251, Asn-266, Asn-276, Gln-297, and Lys-302. The PAC 1 domain occupies 258 to 312; sequence NNYCGRILNYKKDGTSFWNLLTIAPIKDESGKVLKFIGMQVEVSKHTEGAKEKAL. Residues Ser-350, Ser-376, and Ser-410 each carry the phosphoserine modification. Disordered stretches follow at residues 351-413 and 434-453; these read ESTN…SLSF and YGEEDDEISDRDERPESVDD. The segment covering 434–443 has biased composition (acidic residues); that stretch reads YGEEDDEISD. Residues 444–453 are compositionally biased toward basic and acidic residues; sequence RDERPESVDD. Phosphoserine is present on Ser-450. In terms of domain architecture, PAS 2 spans 462-535; sequence KGIDLATTLE…KKIRNAIDNQ (74 aa). An FMN-binding site is contributed by Asn-511. An S-4a-FMN cysteine modification is found at Cys-512. Residues Arg-513, Gln-516, Arg-529, Asn-544, Asn-554, Phe-556, and Gln-575 each coordinate FMN. In terms of domain architecture, PAC 2 spans 536 to 590; the sequence is TEVTVQLINYTKSGKKFWNIFHLQPMRDQKGEVQYFIGVQLDGSKHVEPVRNVIE. Residues 663-952 enclose the Protein kinase domain; that stretch reads FKPVKPLGSG…ANEVKQHSFF (290 aa). ATP-binding positions include 669–677 and Lys-692; that span reads LGSGDTGSV. Asp-788 (proton acceptor) is an active-site residue. Residues 806–862 are activation loop; sequence DFDLSCLTSCKPQLLIPSIDEKKKKKQQKSQQTPIFMAEPMRASNSFVGTEEYIAPE.

Belongs to the protein kinase superfamily. AGC Ser/Thr protein kinase family. As to quaternary structure, homodimer; disulfide-linked. Interacts with PKS1, PKS2, RPT2, RPT3, PHOT2 and BLUS1. Subunit of a complex made of CAR6, PHOT1 and RPT3/NPH3. Associates with CBC1 and CBC2. Binds to BHP. It depends on FMN as a cofactor. In terms of processing, autophosphorylated at Ser-185, Ser-350 and Ser-410 in response to blue light irradiation. Post-translationally, 2 molecules of FMN bind covalently to cysteines after exposure to blue light and are reversed in the dark. As to expression, present in guard cells (at protein level).

The protein localises to the cell membrane. Its subcellular location is the cytoplasm. It catalyses the reaction L-seryl-[protein] + ATP = O-phospho-L-seryl-[protein] + ADP + H(+). The enzyme catalyses L-threonyl-[protein] + ATP = O-phospho-L-threonyl-[protein] + ADP + H(+). Autophosphorylation is inhibited by staurosporine, but not by tyrphostin 9, sphingosine, GW5074 and BML-265. Its function is as follows. Protein kinase that acts as a blue light (BL) photoreceptor in a signal-transduction pathway for photo-induced movements. Triggers the phosphorylation of AHA1 and AHA2 C-terminal penultimate Thr in guard cells to activate them and induce stomatal opening in response to blue light (BL). Also phosphorylates BLUS1, a kinase involved in stomatal opening. Mediates the phosphorylation of CBC1 in stomata, but not of CBC2, in response to blue light. Required for blue light mediated mRNA destabilization. Mediates calcium spiking of extracellular origin in response to a low rate of blue light. Also mediates rapid membrane depolarization and growth inhibition in response to blue light. Necessary for root phototropism. Involved in hypocotyl phototropism under a low rate but not under a high rate of blue light. Contributes to the chloroplast accumulation but seems not to be required for chloroplast translocation. Regulates stomata opening and photomorphogenesis response of leaf tissue. Confers sensitivity to drought. Not involved in hypocotyl elongation inhibition, anthocyanin accumulation or cotyledon opening. Involved in the regulation of leaf position and morphology via the phosphorylation of ABCB19 during blue light responses to modulate auxin distribution. In Arabidopsis thaliana (Mouse-ear cress), this protein is Phototropin-1.